Here is a 443-residue protein sequence, read N- to C-terminus: ATP-dependent protease ATPase subunit HslU (443 aa).

ATP is bound by residues I18, 60–65 (GVGKTE), D256, E321, and R393.

It belongs to the ClpX chaperone family. HslU subfamily. A double ring-shaped homohexamer of HslV is capped on each side by a ring-shaped HslU homohexamer. The assembly of the HslU/HslV complex is dependent on binding of ATP.

Its subcellular location is the cytoplasm. ATPase subunit of a proteasome-like degradation complex; this subunit has chaperone activity. The binding of ATP and its subsequent hydrolysis by HslU are essential for unfolding of protein substrates subsequently hydrolyzed by HslV. HslU recognizes the N-terminal part of its protein substrates and unfolds these before they are guided to HslV for hydrolysis. This is ATP-dependent protease ATPase subunit HslU from Pectobacterium atrosepticum (strain SCRI 1043 / ATCC BAA-672) (Erwinia carotovora subsp. atroseptica).